Here is a 557-residue protein sequence, read N- to C-terminus: Formate--tetrahydrofolate ligase (557 aa).

65–72 is an ATP binding site; the sequence is SPAGEGKT.

Belongs to the formate--tetrahydrofolate ligase family.

It catalyses the reaction (6S)-5,6,7,8-tetrahydrofolate + formate + ATP = (6R)-10-formyltetrahydrofolate + ADP + phosphate. It functions in the pathway one-carbon metabolism; tetrahydrofolate interconversion. This is Formate--tetrahydrofolate ligase from Methylobacillus flagellatus (strain ATCC 51484 / DSM 6875 / VKM B-1610 / KT).